We begin with the raw amino-acid sequence, 341 residues long: UDP-N-acetylenolpyruvoylglucosamine reductase (341 aa).

Residues 13–185 (FGVEQSCLSM…TAVGLRLPKA (173 aa)) form the FAD-binding PCMH-type domain. The active site involves R161. S231 serves as the catalytic Proton donor. E327 is a catalytic residue.

This sequence belongs to the MurB family. The cofactor is FAD.

The protein resides in the cytoplasm. It catalyses the reaction UDP-N-acetyl-alpha-D-muramate + NADP(+) = UDP-N-acetyl-3-O-(1-carboxyvinyl)-alpha-D-glucosamine + NADPH + H(+). Its pathway is cell wall biogenesis; peptidoglycan biosynthesis. Its function is as follows. Cell wall formation. This is UDP-N-acetylenolpyruvoylglucosamine reductase from Shewanella sp. (strain MR-4).